The sequence spans 201 residues: Holliday junction branch migration complex subunit RuvA (201 aa).

The domain I stretch occupies residues 1 to 63 (MISHFSGTVS…EESLTLYGFV (63 aa)). The segment at 64–142 (EADDRDAFEL…ALAPRGASAS (79 aa)) is domain II. The segment at 143-153 (GATHVAAPWRE) is flexible linker. The domain III stretch occupies residues 153–201 (EQVAEGLVGLGWSTKDAEKAVDKVVALKEADPAMSIGNLMRAALRSLAR).

Belongs to the RuvA family. As to quaternary structure, homotetramer. Forms an RuvA(8)-RuvB(12)-Holliday junction (HJ) complex. HJ DNA is sandwiched between 2 RuvA tetramers; dsDNA enters through RuvA and exits via RuvB. An RuvB hexamer assembles on each DNA strand where it exits the tetramer. Each RuvB hexamer is contacted by two RuvA subunits (via domain III) on 2 adjacent RuvB subunits; this complex drives branch migration. In the full resolvosome a probable DNA-RuvA(4)-RuvB(12)-RuvC(2) complex forms which resolves the HJ.

Its subcellular location is the cytoplasm. In terms of biological role, the RuvA-RuvB-RuvC complex processes Holliday junction (HJ) DNA during genetic recombination and DNA repair, while the RuvA-RuvB complex plays an important role in the rescue of blocked DNA replication forks via replication fork reversal (RFR). RuvA specifically binds to HJ cruciform DNA, conferring on it an open structure. The RuvB hexamer acts as an ATP-dependent pump, pulling dsDNA into and through the RuvAB complex. HJ branch migration allows RuvC to scan DNA until it finds its consensus sequence, where it cleaves and resolves the cruciform DNA. In Cutibacterium acnes (strain DSM 16379 / KPA171202) (Propionibacterium acnes), this protein is Holliday junction branch migration complex subunit RuvA.